Here is a 607-residue protein sequence, read N- to C-terminus: UvrABC system protein C (607 aa).

Residues 11–89 enclose the GIY-YIG domain; that stretch reads CKPGVYRFED…IKEFAPPCNV (79 aa). Residues 201–236 form the UVR domain; it reads SSLLESLKKKMLKASKNKEYEEAAILRDKIQAAQTV.

It belongs to the UvrC family. In terms of assembly, interacts with UvrB in an incision complex.

The protein localises to the cytoplasm. Its function is as follows. The UvrABC repair system catalyzes the recognition and processing of DNA lesions. UvrC both incises the 5' and 3' sides of the lesion. The N-terminal half is responsible for the 3' incision and the C-terminal half is responsible for the 5' incision. This is UvrABC system protein C from Tropheryma whipplei (strain TW08/27) (Whipple's bacillus).